A 333-amino-acid chain; its full sequence is MNISTMNLDQELAEIRASSSDHTNYFYSSERREHMFDKVLTPSDVGKLNRLVIPKQHAENFFPLEDNQNGTVLDFQDKNGKMWRFRYSYWNSSQSYVMTKGWSRFVKEKKLFAGDTVSFYRGYIPDDNAQPERRRKIMFIDWRPRAEINFVHNINNHNFVFGSPTYPTARFYPVTPEYSMPYRSFPPFYQNQFQEREYLGYGYGRVVNGNGVRYYAGSPLDQHHQWNLGRSEPLVYDSVPVFPAGRVPPSAPPQPSTTKKLRLFGVDVEESSSSGDTRGEMGVAGYSSSSPVVIRDDDQSFWRSPRGEMASSSSAMQLSDDEEYKRKGKSLEL.

The TF-B3 DNA-binding region spans Phe36–Arg145. The tract at residues Val268–Leu333 is disordered. Over residues Glu323 to Leu333 the composition is skewed to basic and acidic residues.

It is found in the nucleus. Regulates lateral organ growth. Functionally redundant with NGA1, NGA2 and NGA3. The polypeptide is B3 domain-containing transcription factor NGA4 (NGA4) (Arabidopsis thaliana (Mouse-ear cress)).